We begin with the raw amino-acid sequence, 643 residues long: 1-deoxy-D-xylulose-5-phosphate synthase (643 aa).

Residues His-72 and 113-115 contribute to the thiamine diphosphate site; that span reads GHA. Asp-144 lines the Mg(2+) pocket. Thiamine diphosphate is bound by residues 145 to 146, Asn-174, Tyr-287, and Glu-370; that span reads GA. Asn-174 is a binding site for Mg(2+).

Belongs to the transketolase family. DXPS subfamily. In terms of assembly, homodimer. It depends on Mg(2+) as a cofactor. The cofactor is thiamine diphosphate.

The catalysed reaction is D-glyceraldehyde 3-phosphate + pyruvate + H(+) = 1-deoxy-D-xylulose 5-phosphate + CO2. It functions in the pathway metabolic intermediate biosynthesis; 1-deoxy-D-xylulose 5-phosphate biosynthesis; 1-deoxy-D-xylulose 5-phosphate from D-glyceraldehyde 3-phosphate and pyruvate: step 1/1. In terms of biological role, catalyzes the acyloin condensation reaction between C atoms 2 and 3 of pyruvate and glyceraldehyde 3-phosphate to yield 1-deoxy-D-xylulose-5-phosphate (DXP). This chain is 1-deoxy-D-xylulose-5-phosphate synthase, found in Synechococcus sp. (strain CC9605).